The primary structure comprises 534 residues: Signal recognition particle subunit SRP54 (534 aa).

The G-domain stretch occupies residues 1–296; sequence MVLQDLGRRI…EPKAFIQKLL (296 aa). Residues 109–116, 191–195, and 249–252 contribute to the GTP site; these read GLQGAGKT, DTSGR, and TKTD. The segment at 297 to 534 is M-domain; sequence GMGDMAGLVE…GGGGGRGRGR (238 aa).

The protein belongs to the GTP-binding SRP family. SRP54 subfamily. As to quaternary structure, fungal signal recognition particle consists of a 7S RNA molecule (scR1) and at least six protein subunits: srp72, srp68, srpA/srp54, sec65, srp21 and srp14.

It localises to the cytoplasm. The protein resides in the endoplasmic reticulum. It catalyses the reaction GTP + H2O = GDP + phosphate + H(+). In terms of biological role, signal-recognition-particle (SRP) assembly has a crucial role in targeting secretory proteins to the rough endoplasmic reticulum (ER) membrane. SRP is required for the cotranslational protein translocation for ER import and preferentially recognizes strongly hydrophobic signal sequences. It is involved in targeting the nascent chain-ribosome (RNC) complex to the ER and is proposed to participate in the arrest of nascent chain elongation during membrane targeting. srpA/srp54 binds to the signal sequence of presecretory protein when they emerge from the ribosomes. srpA/srp54 interacts with the scR1 RNA and mediates the association of the resulting SRP-RNC complex with the signal recognition particle receptor (SR) via its alpha subunit srp101. Both, srpA/srp54 and srp101, are locked in their GTP bound forms in the SRP-RNC-SR complex, which dissociates upon transferring the signal sequence to the protein-conducting channel (translocon). After signal sequence transfer, srpA/srp54 and srp101 act as reciprocal GTPase-activating proteins (GAPs), thereby resolving their association. This is Signal recognition particle subunit SRP54 (srpA) from Aspergillus niger.